We begin with the raw amino-acid sequence, 466 residues long: Citrate synthase, mitochondrial (466 aa).

The transit peptide at 1–27 (MALLTAAARLLGTKNASCLVLAARHAS) directs the protein to the mitochondrion. The SIFI-degron signature appears at 2–21 (ALLTAAARLLGTKNASCLVL). Lys57 carries the post-translational modification N6-succinyllysine. The residue at position 76 (Lys76) is an N6-acetyllysine; alternate. Residue Lys76 is modified to N6-succinyllysine; alternate. Residues Lys103 and Lys193 each carry the N6-succinyllysine modification. His301 is a catalytic residue. N6-acetyllysine; alternate is present on residues Lys321 and Lys327. Lys321 and Lys327 each carry N6-succinyllysine; alternate. His347 is an active-site residue. Arg356 contributes to the oxaloacetate binding site. An N6-acetyllysine; alternate modification is found at Lys375. Residue Lys375 is modified to N6-succinyllysine; alternate. Lys382 is subject to N6-acetyllysine. Position 393 is an N6-acetyllysine; alternate (Lys393). Lys393 is modified (N6-succinyllysine; alternate). Lys395 is subject to N6,N6,N6-trimethyllysine. The active site involves Asp402. Residues Arg428 and Arg448 each contribute to the oxaloacetate site. Residue Lys450 is modified to N6-succinyllysine. Lys459 carries the post-translational modification N6-acetyllysine; alternate. The residue at position 459 (Lys459) is an N6-succinyllysine; alternate.

This sequence belongs to the citrate synthase family. In terms of assembly, homodimer. Post-translationally, methylated. Trimethylation at Lys-395 by CSKMT decreases citrate synthase activity. In response to mitochondrial stress, the precursor protein is ubiquitinated by the SIFI complex in the cytoplasm before mitochondrial import, leading to its degradation. Within the SIFI complex, UBR4 initiates ubiquitin chain that are further elongated or branched by KCMF1.

The protein localises to the mitochondrion matrix. The enzyme catalyses oxaloacetate + acetyl-CoA + H2O = citrate + CoA + H(+). It participates in carbohydrate metabolism; tricarboxylic acid cycle; isocitrate from oxaloacetate: step 1/2. Functionally, key enzyme of the Krebs tricarboxylic acid cycle which catalyzes the synthesis of citrate from acetyl coenzyme A and oxaloacetate. This chain is Citrate synthase, mitochondrial (CS), found in Homo sapiens (Human).